We begin with the raw amino-acid sequence, 254 residues long: Adenosine 5'-phosphosulfate reductase (254 aa).

The [4Fe-4S] cluster site is built by Cys131, Cys132, Cys212, and Cys215. Catalysis depends on Cys238, which acts as the Nucleophile; cysteine thiosulfonate intermediate.

The protein belongs to the PAPS reductase family. CysH subfamily. Requires [4Fe-4S] cluster as cofactor.

It is found in the cytoplasm. The enzyme catalyses [thioredoxin]-disulfide + sulfite + AMP + 2 H(+) = adenosine 5'-phosphosulfate + [thioredoxin]-dithiol. It participates in sulfur metabolism; hydrogen sulfide biosynthesis; sulfite from sulfate. Catalyzes the formation of sulfite from adenosine 5'-phosphosulfate (APS) using thioredoxin as an electron donor. The polypeptide is Adenosine 5'-phosphosulfate reductase (Mesorhizobium japonicum (strain LMG 29417 / CECT 9101 / MAFF 303099) (Mesorhizobium loti (strain MAFF 303099))).